The chain runs to 693 residues: Elongation factor G (693 aa).

Residues 8–282 form the tr-type G domain; that stretch reads KNTRNIGIMA…AVIDYLPSPL (275 aa). Residues 17–24, 81–85, and 135–138 each bind GTP; these read AHIDAGKT, DTPGH, and NKMD.

Belongs to the TRAFAC class translation factor GTPase superfamily. Classic translation factor GTPase family. EF-G/EF-2 subfamily.

Its subcellular location is the cytoplasm. Its function is as follows. Catalyzes the GTP-dependent ribosomal translocation step during translation elongation. During this step, the ribosome changes from the pre-translocational (PRE) to the post-translocational (POST) state as the newly formed A-site-bound peptidyl-tRNA and P-site-bound deacylated tRNA move to the P and E sites, respectively. Catalyzes the coordinated movement of the two tRNA molecules, the mRNA and conformational changes in the ribosome. This is Elongation factor G from Staphylococcus epidermidis (strain ATCC 35984 / DSM 28319 / BCRC 17069 / CCUG 31568 / BM 3577 / RP62A).